A 153-amino-acid polypeptide reads, in one-letter code: Ribosomal RNA large subunit methyltransferase H (153 aa).

Residues L70, G102, and 121–126 (FSKMTF) contribute to the S-adenosyl-L-methionine site.

Belongs to the RNA methyltransferase RlmH family. Homodimer.

Its subcellular location is the cytoplasm. It catalyses the reaction pseudouridine(1915) in 23S rRNA + S-adenosyl-L-methionine = N(3)-methylpseudouridine(1915) in 23S rRNA + S-adenosyl-L-homocysteine + H(+). Specifically methylates the pseudouridine at position 1915 (m3Psi1915) in 23S rRNA. The polypeptide is Ribosomal RNA large subunit methyltransferase H (Desulfotalea psychrophila (strain LSv54 / DSM 12343)).